A 234-amino-acid chain; its full sequence is LRP chaperone MESD (234 aa).

The N-terminal stretch at 1–33 (MAASRWARKAVVLLCASDLLLLLLLLPPPGSCA) is a signal peptide. Residues 1–164 (MAASRWARKA…DRAIFMLRDG (164 aa)) are chaperone domain. 2 disordered regions span residues 31 to 95 (SCAA…DFSK) and 187 to 234 (GQVY…REDL). Over residues 54–70 (DIRDYNDADMARLLEQW) the composition is skewed to basic and acidic residues. Over residues 71-80 (EKDDDIEEGD) the composition is skewed to acidic residues. An escort domain region spans residues 165 to 204 (SYAWEIKDFLVGQDRCADVTLEGQVYPGKGGGSKEKNKTK). Residues 196 to 234 (GSKEKNKTKQDKGKKKKEGDLKSRSSKEENRAGNKREDL) show a composition bias toward basic and acidic residues. Residue N201 is glycosylated (N-linked (GlcNAc...) asparagine). The Prevents secretion from ER signature appears at 231 to 234 (REDL).

The protein belongs to the MESD family. In terms of assembly, monomer. Interacts with LRP5; the interaction prevents LRP5 from forming aggregates and chaperones LRP6 to the plasma membrane. Interacts with LRP6; the interaction prevents LRP6 from forming aggregates and chaperones LRP6 to the plasma membrane. Interacts with LRP4; the interaction promotes glycosylation of LRP4 and its cell-surface expression.

It is found in the endoplasmic reticulum. Chaperone specifically assisting the folding of beta-propeller/EGF modules within the family of low-density lipoprotein receptors (LDLRs). Acts as a modulator of the Wnt pathway through chaperoning the coreceptors of the canonical Wnt pathway, LRP5 and LRP6, to the plasma membrane. Essential for specification of embryonic polarity and mesoderm induction. Plays an essential role in neuromuscular junction (NMJ) formation by promoting cell-surface expression of LRP4. May regulate phagocytosis of apoptotic retinal pigment epithelium (RPE) cells. This Homo sapiens (Human) protein is LRP chaperone MESD.